The following is a 368-amino-acid chain: Glutamate 5-kinase (368 aa).

K9 contacts ATP. The substrate site is built by S49, D136, and N148. ATP-binding positions include 168 to 169 and 210 to 216; these read TD and TGGMMTK. Residues 275 to 353 form the PUA domain; the sequence is AGIITIDNGA…ADIENVLGYE (79 aa).

Belongs to the glutamate 5-kinase family.

It is found in the cytoplasm. The catalysed reaction is L-glutamate + ATP = L-glutamyl 5-phosphate + ADP. Its pathway is amino-acid biosynthesis; L-proline biosynthesis; L-glutamate 5-semialdehyde from L-glutamate: step 1/2. In terms of biological role, catalyzes the transfer of a phosphate group to glutamate to form L-glutamate 5-phosphate. This chain is Glutamate 5-kinase, found in Haemophilus influenzae (strain PittEE).